The primary structure comprises 369 residues: 4-hydroxy-3-methylbut-2-en-1-yl diphosphate synthase (flavodoxin) (369 aa).

[4Fe-4S] cluster is bound by residues C270, C273, C305, and E312.

Belongs to the IspG family. Requires [4Fe-4S] cluster as cofactor.

It catalyses the reaction (2E)-4-hydroxy-3-methylbut-2-enyl diphosphate + oxidized [flavodoxin] + H2O + 2 H(+) = 2-C-methyl-D-erythritol 2,4-cyclic diphosphate + reduced [flavodoxin]. Its pathway is isoprenoid biosynthesis; isopentenyl diphosphate biosynthesis via DXP pathway; isopentenyl diphosphate from 1-deoxy-D-xylulose 5-phosphate: step 5/6. Functionally, converts 2C-methyl-D-erythritol 2,4-cyclodiphosphate (ME-2,4cPP) into 1-hydroxy-2-methyl-2-(E)-butenyl 4-diphosphate. The protein is 4-hydroxy-3-methylbut-2-en-1-yl diphosphate synthase (flavodoxin) of Pseudomonas putida (strain ATCC 47054 / DSM 6125 / CFBP 8728 / NCIMB 11950 / KT2440).